The following is a 429-amino-acid chain: Trigger factor (429 aa).

The PPIase FKBP-type domain maps to 161–246 (GDRLSIDFKG…INEIASPKEL (86 aa)).

Belongs to the FKBP-type PPIase family. Tig subfamily.

Its subcellular location is the cytoplasm. The enzyme catalyses [protein]-peptidylproline (omega=180) = [protein]-peptidylproline (omega=0). Its function is as follows. Involved in protein export. Acts as a chaperone by maintaining the newly synthesized protein in an open conformation. Functions as a peptidyl-prolyl cis-trans isomerase. The polypeptide is Trigger factor (Vesicomyosocius okutanii subsp. Calyptogena okutanii (strain HA)).